The chain runs to 196 residues: Auxin-induced protein 22B (196 aa).

Residues leucine 18–leucine 22 carry the EAR-like (transcriptional repression) motif. The interval arginine 44–proline 74 is disordered. The PB1 domain occupies glycine 99–glycine 186.

The protein belongs to the Aux/IAA family. As to quaternary structure, homodimers and heterodimers.

It is found in the nucleus. Functionally, aux/IAA proteins are short-lived transcriptional factors that function as repressors of early auxin response genes at low auxin concentrations. Repression is thought to result from the interaction with auxin response factors (ARFs), proteins that bind to the auxin-responsive promoter element (AuxRE). Formation of heterodimers with ARF proteins may alter their ability to modulate early auxin response genes expression. The protein is Auxin-induced protein 22B (AUX22B) of Vigna radiata var. radiata (Mung bean).